Consider the following 385-residue polypeptide: Heat-inducible transcription repressor HrcA (385 aa).

This sequence belongs to the HrcA family.

Its function is as follows. Negative regulator of class I heat shock genes (grpE-dnaK-dnaJ and groELS operons). Prevents heat-shock induction of these operons. The polypeptide is Heat-inducible transcription repressor HrcA (Protochlamydia amoebophila (strain UWE25)).